Consider the following 144-residue polypeptide: L-fucose mutarotase (144 aa).

The active-site Proton donor is the H22. Substrate is bound by residues D30, R109, and 131–133 (YGN).

The protein belongs to the RbsD / FucU family. FucU mutarotase subfamily. Homodecamer.

Its subcellular location is the cytoplasm. It catalyses the reaction alpha-L-fucose = beta-L-fucose. The protein operates within carbohydrate metabolism; L-fucose metabolism. Its function is as follows. Involved in the anomeric conversion of L-fucose. This is L-fucose mutarotase from Histophilus somni (strain 129Pt) (Haemophilus somnus).